A 523-amino-acid chain; its full sequence is GMP synthase [glutamine-hydrolyzing] (523 aa).

The Glutamine amidotransferase type-1 domain maps to 9-198 (PVLVVDFGAQ…LTEIAGLEQN (190 aa)). Residue cysteine 86 is the Nucleophile of the active site. Residues histidine 172 and glutamate 174 contribute to the active site. In terms of domain architecture, GMPS ATP-PPase spans 199-397 (WTAANIAEEL…LGLPEEIVGR (199 aa)). 227 to 233 (SGGVDSA) lines the ATP pocket.

In terms of assembly, homodimer.

It carries out the reaction XMP + L-glutamine + ATP + H2O = GMP + L-glutamate + AMP + diphosphate + 2 H(+). It participates in purine metabolism; GMP biosynthesis; GMP from XMP (L-Gln route): step 1/1. Functionally, catalyzes the synthesis of GMP from XMP. The protein is GMP synthase [glutamine-hydrolyzing] of Corynebacterium glutamicum (strain ATCC 13032 / DSM 20300 / JCM 1318 / BCRC 11384 / CCUG 27702 / LMG 3730 / NBRC 12168 / NCIMB 10025 / NRRL B-2784 / 534).